Here is a 148-residue protein sequence, read N- to C-terminus: MRLTTKGRFAVTAMLDLAMNAQTGAVKLSAISERQNISLSYLEQLFGKLRRAGLVESLRGPGGGYILAAPAARINIAQIIAAAEDRLDATQCGSKANCHHGAPCLTHDLWENLNKTINDYLGSVTLQSIIEQKNNGDGSRVVQFTHIH.

One can recognise an HTH rrf2-type domain in the interval 2–131 (RLTTKGRFAV…GSVTLQSIIE (130 aa)).

This is Putative HTH-type transcriptional regulator NMA1593 from Neisseria meningitidis serogroup A / serotype 4A (strain DSM 15465 / Z2491).